A 33-amino-acid polypeptide reads, in one-letter code: Photosystem II reaction center protein Psb30 (33 aa).

A helical transmembrane segment spans residues 5 to 25 (ILAQLTALAFIVVSGPLVIAL).

It belongs to the Psb30/Ycf12 family. In terms of assembly, PSII is composed of 1 copy each of membrane proteins PsbA, PsbB, PsbC, PsbD, PsbE, PsbF, PsbH, PsbI, PsbJ, PsbK, PsbL, PsbM, PsbT, PsbX, PsbY, PsbZ, Psb30/Ycf12, peripheral proteins of the oxygen-evolving complex and a large number of cofactors. It forms dimeric complexes.

The protein resides in the plastid. The protein localises to the chloroplast thylakoid membrane. Functionally, a core subunit of photosystem II (PSII), probably helps stabilize the reaction center. The chain is Photosystem II reaction center protein Psb30 from Chaetosphaeridium globosum (Charophycean green alga).